The chain runs to 329 residues: Phytochromobilin:ferredoxin oxidoreductase, chloroplastic (329 aa).

The N-terminal 45 residues, 1-45 (MALSMEFGFSIGSCFKAPNPPVLISASPNKINFTLRRRKKRFLLR), are a transit peptide targeting the chloroplast.

The protein belongs to the HY2 family.

It is found in the plastid. Its subcellular location is the chloroplast. It catalyses the reaction (3Z)-phytochromobilin + 2 oxidized [2Fe-2S]-[ferredoxin] = biliverdin IXalpha + 2 reduced [2Fe-2S]-[ferredoxin] + 2 H(+). Catalyzes the two-electron reduction of biliverdin IX-alpha to the tetrapyrrole chromophore phytochromobilin (PPhiB). This is Phytochromobilin:ferredoxin oxidoreductase, chloroplastic from Arabidopsis thaliana (Mouse-ear cress).